Here is a 408-residue protein sequence, read N- to C-terminus: RNA-splicing ligase RtcB1 (408 aa).

Positions 75, 78, 168, 185, and 281 each coordinate Mn(2+). 167–171 (NHFIE) serves as a coordination point for GMP. Residues 281–282 (HN), 313–316 (PGSM), Ser-320, 337–340 (HGAG), and Lys-407 contribute to the GMP site. His-337 (GMP-histidine intermediate) is an active-site residue.

It belongs to the RtcB family. In terms of assembly, monomer. It depends on Mn(2+) as a cofactor.

The catalysed reaction is a 3'-end 3'-phospho-ribonucleotide-RNA + a 5'-end dephospho-ribonucleoside-RNA + GTP = a ribonucleotidyl-ribonucleotide-RNA + GMP + diphosphate. The enzyme catalyses a 3'-end 2',3'-cyclophospho-ribonucleotide-RNA + a 5'-end dephospho-ribonucleoside-RNA + GTP + H2O = a ribonucleotidyl-ribonucleotide-RNA + GMP + diphosphate + H(+). Its function is as follows. GTP-dependent RNA ligase that is involved in RNA repair. Joins RNA with 2',3'-cyclic-phosphate or 3'-phosphate ends to RNA with 5'-hydroxy ends. GTP-dependent RNA ligase that is involved in tRNA repair. Repairs broken tRNA(Asp) and tRNA(Arg) that have been cleaved by colicin E5 or colicin D, respectively. Does not repair damaged 16S rRNA in 30S ribosomal subunits. The protein is RNA-splicing ligase RtcB1 of Escherichia coli (strain ATCC 25922 / DSM 1103 / LMG 8223 / NCIMB 12210 / NCTC 12241 / WDCM 00013 / Seattle 1946).